A 72-amino-acid polypeptide reads, in one-letter code: Probable neurotoxin pcD-996 (72 aa).

An N-terminal signal peptide occupies residues 1 to 19 (MNYLVMISFALLLVIGVES). The LCN-type CS-alpha/beta domain occupies 21-72 (RDGYFVEPDNCLVYCMPSPEICDRGCKRYGATSGFCKEFSKGENFCWCKGLR). 3 cysteine pairs are disulfide-bonded: Cys-35-Cys-56, Cys-42-Cys-66, and Cys-46-Cys-68. Residue Arg-72 is a propeptide, removed by a carboxypeptidase.

The protein belongs to the long (3 C-C) scorpion toxin superfamily. In terms of tissue distribution, expressed by the venom gland.

Its subcellular location is the secreted. In Androctonus australis (Sahara scorpion), this protein is Probable neurotoxin pcD-996.